The chain runs to 150 residues: Transcription antitermination protein NusB (150 aa).

Belongs to the NusB family.

In terms of biological role, involved in transcription antitermination. Required for transcription of ribosomal RNA (rRNA) genes. Binds specifically to the boxA antiterminator sequence of the ribosomal RNA (rrn) operons. This is Transcription antitermination protein NusB from Streptococcus equi subsp. zooepidemicus (strain H70).